Here is a 146-residue protein sequence, read N- to C-terminus: UPF0260 protein VF_1660 (146 aa).

It belongs to the UPF0260 family.

This Aliivibrio fischeri (strain ATCC 700601 / ES114) (Vibrio fischeri) protein is UPF0260 protein VF_1660.